A 257-amino-acid chain; its full sequence is UPF0246 protein Daro_2893 (257 aa).

The protein belongs to the UPF0246 family.

This Dechloromonas aromatica (strain RCB) protein is UPF0246 protein Daro_2893.